We begin with the raw amino-acid sequence, 134 residues long: Large ribosomal subunit protein uL16c (134 aa).

The protein belongs to the universal ribosomal protein uL16 family. Part of the 50S ribosomal subunit.

The protein resides in the plastid. It is found in the chloroplast. The protein is Large ribosomal subunit protein uL16c of Gnetum parvifolium (Small-leaved jointfir).